The primary structure comprises 494 residues: MFKFALALTLCLAGASLSLAQHNPQWWGNRNTIVHLFEWKWSDIAGECETFLAPRGFAGVQVSPVNENIIAAGRPWWERYQPISYKLTTRSGNEEEFADMVRRCNDVGIRIYVDVLLNHMSGDFDGVAVGTAGTEAEPSKKSFPGVPHTAQDFHPSCEITDWNDRFQVQECELVGLKDLNQHSDYVRSKLIEFLDHLIELGVAGFRVDAAKHMAAEDLEYIYGSLSNLNIEHGFPHNARPFIFQEVIDHGHETVSREEYNQLGAVTEFRFSEEIGRAFRGNNALKWLQSWGTDWGFLNSEQALTFVDNHDNQRDHGSVLNYKSPRQYKMATAFHLAYPYGISRVMSSFAFDDHDTPPPQDAQENIISPEFDEDGACVNGWICEHRWRQIYAMVGFKNAVRDTELSGWWDNGDNQISFCRGNKGFLAVNNNLYDLSQELNTCLPAGEYCDVISGSLIDGACTGKSVTVNEYGYGYIHIGSDDFDGVLALHVNAKV.

A signal peptide spans 1-20 (MFKFALALTLCLAGASLSLA). Position 21 is a pyrrolidone carboxylic acid (Gln-21). Cysteines 48 and 104 form a disulfide. The Ca(2+) site is built by Asn-118, Gln-169, and Asp-178. Cys-157 and Cys-171 are disulfide-bonded. Arg-206 serves as a coordination point for chloride. The Nucleophile role is filled by Asp-208. His-212 is a Ca(2+) binding site. Glu-245 functions as the Proton donor in the catalytic mechanism. Chloride-binding residues include Asn-308 and Arg-343. 3 disulfide bridges follow: Cys-376–Cys-382, Cys-418–Cys-441, and Cys-448–Cys-460.

It belongs to the glycosyl hydrolase 13 family. As to quaternary structure, monomer. Requires Ca(2+) as cofactor. The cofactor is chloride.

It is found in the secreted. It catalyses the reaction Endohydrolysis of (1-&gt;4)-alpha-D-glucosidic linkages in polysaccharides containing three or more (1-&gt;4)-alpha-linked D-glucose units.. The protein is Alpha-amylase-related protein (Amyrel) of Drosophila punjabiensis (Fruit fly).